Here is a 488-residue protein sequence, read N- to C-terminus: MNEALKSLTVTGKERYKSGVLEYKRMGYWEPDYEPKDTDVIALFRVTPQNGVDPIEASAAVAGESSTATWTVVWTDRLTAAEKYRAKCYRVDPVPNTPGSYFAYIAYDLDLFEPGSIANLSASIIGNVFGFKPLKALRLEDMRFPVAYVKTFQGPATGIVVERERLDKFGRPLLGATVKPKLGLSGRNYGRVVYEALKGGLDFTKDDENTNSQPFMHWRDRFLYCMEAVNKAQAATGEVKGTYLNVTAATMEDMYERAEFAKELGSVIIMIDLVIGYTAIQSMAKWARRNDMILHLHRAGHGTYTRQKSHGVSFRVIAKWMRLAGVDHIHAGTVVGKLEGDPNTTRGYYDICREDHNPMALEYGLFFEQHWASLNKLMPVASGGIHAGQMHQLLNYLGEDVVLQFGGGTIGHPLGIQAGATANRVALEAMILARNEGRDYVHEGPEILAKAAATCTPLKQALDVWKNVTFNYDSTDTPDFVPTAAVTA.

Positions 127 and 177 each coordinate substrate. Residue Lys179 is the Proton acceptor of the active site. A substrate-binding site is contributed by Lys181. Mg(2+) contacts are provided by Lys205, Asp207, and Glu208. Lys205 is subject to N6-carboxylysine. The Proton acceptor role is filled by His297. Residues Arg298, His330, and Ser382 each coordinate substrate.

This sequence belongs to the RuBisCO large chain family. Type I subfamily. In terms of assembly, heterohexadecamer of 8 large chains and 8 small chains. It depends on Mg(2+) as a cofactor.

The catalysed reaction is 2 (2R)-3-phosphoglycerate + 2 H(+) = D-ribulose 1,5-bisphosphate + CO2 + H2O. The enzyme catalyses D-ribulose 1,5-bisphosphate + O2 = 2-phosphoglycolate + (2R)-3-phosphoglycerate + 2 H(+). Functionally, ruBisCO catalyzes two reactions: the carboxylation of D-ribulose 1,5-bisphosphate, the primary event in carbon dioxide fixation, as well as the oxidative fragmentation of the pentose substrate. Both reactions occur simultaneously and in competition at the same active site. The protein is Ribulose bisphosphate carboxylase large chain 1 of Bradyrhizobium sp. (strain BTAi1 / ATCC BAA-1182).